The sequence spans 392 residues: Phosphoglycerate kinase (392 aa).

Residues 21–23 (DFN), R36, 59–62 (HLGR), R113, and R146 each bind substrate. Residues K197, E319, and 345-348 (GGDT) each bind ATP.

It belongs to the phosphoglycerate kinase family. As to quaternary structure, monomer.

The protein localises to the cytoplasm. It carries out the reaction (2R)-3-phosphoglycerate + ATP = (2R)-3-phospho-glyceroyl phosphate + ADP. It functions in the pathway carbohydrate degradation; glycolysis; pyruvate from D-glyceraldehyde 3-phosphate: step 2/5. The sequence is that of Phosphoglycerate kinase from Francisella tularensis subsp. holarctica (strain FTNF002-00 / FTA).